A 251-amino-acid polypeptide reads, in one-letter code: Flap endonuclease Xni (251 aa).

Residue aspartate 104 participates in Mg(2+) binding. In terms of domain architecture, 5'-3' exonuclease spans valine 160 to leucine 249. Leucine 171, alanine 172, proline 180, valine 182, and isoleucine 185 together coordinate K(+). The tract at residues glycine 184–serine 189 is interaction with DNA.

This sequence belongs to the Xni family. Requires Mg(2+) as cofactor. The cofactor is K(+).

Its function is as follows. Has flap endonuclease activity. During DNA replication, flap endonucleases cleave the 5'-overhanging flap structure that is generated by displacement synthesis when DNA polymerase encounters the 5'-end of a downstream Okazaki fragment. The sequence is that of Flap endonuclease Xni from Escherichia coli O139:H28 (strain E24377A / ETEC).